The chain runs to 841 residues: Outer membrane usher protein MyfC (841 aa).

The first 26 residues, Met-1–Ala-26, serve as a signal peptide directing secretion. A disulfide bridge links Cys-817 with Cys-840.

The protein belongs to the fimbrial export usher family.

The protein localises to the cell outer membrane. Functionally, involved in the export and assembly of the MyfA fimbrial subunit. This chain is Outer membrane usher protein MyfC (myfC), found in Yersinia enterocolitica.